We begin with the raw amino-acid sequence, 1528 residues long: DNA topoisomerase 2-alpha (1528 aa).

An N-acetylmethionine modification is found at methionine 1. Position 4 is a phosphoserine (serine 4). Residue lysine 17 forms a Glycyl lysine isopeptide (Lys-Gly) (interchain with G-Cter in SUMO2) linkage. ATP is bound by residues asparagine 90, asparagine 119, and 147–149; that span reads SSN. Residues lysine 155 and lysine 156 each participate in a glycyl lysine isopeptide (Lys-Gly) (interchain with G-Cter in SUMO2) cross-link. Residue 160–167 coordinates ATP; it reads GRNGYGAK. The residue at position 281 (threonine 281) is a Phosphothreonine. Residues 341 to 343 are interaction with DNA; it reads KKK. A Glycyl lysine isopeptide (Lys-Gly) (interchain with G-Cter in SUMO2) cross-link involves residue lysine 351. 375–377 is a binding site for ATP; the sequence is QTK. Residues lysine 385, lysine 396, lysine 415, lysine 417, lysine 424, and lysine 439 each participate in a glycyl lysine isopeptide (Lys-Gly) (interchain with G-Cter in SUMO2) cross-link. The 118-residue stretch at 454-571 folds into the Toprim domain; that stretch reads CTLILTEGDS…SLLRHRFLEE (118 aa). A Mg(2+)-binding site is contributed by glutamate 460. Residues lysine 465, lysine 479, and lysine 528 each participate in a glycyl lysine isopeptide (Lys-Gly) (interchain with G-Cter in SUMO2) cross-link. 2 residues coordinate Mg(2+): aspartate 540 and aspartate 542. Glycyl lysine isopeptide (Lys-Gly) (interchain with G-Cter in SUMO2) cross-links involve residues lysine 583, lysine 598, lysine 613, lysine 621, lysine 624, lysine 631, lysine 638, lysine 654, lysine 661, and lysine 675. Positions 714–1168 constitute a Topo IIA-type catalytic domain; it reads IPSMVDGLKP…SPSDLWKEDL (455 aa). Tyrosine 804 acts as the O-(5'-phospho-DNA)-tyrosine intermediate in catalysis. The tract at residues 989–998 is interaction with DNA; sequence KLQSSLTCNS. Lysine 1074 participates in a covalent cross-link: Glycyl lysine isopeptide (Lys-Gly) (interchain with G-Cter in SUMO2). 2 disordered regions span residues 1090 to 1118 and 1183 to 1211; these read KEAQQKVPDEEENEESDTETSTSDSAAEA and KQDEQVGLPGKAGKAKGKKAQMCADVLPS. Positions 1098–1107 are enriched in acidic residues; the sequence is DEEENEESDT. Position 1105 is a phosphoserine; by CK1 (serine 1105). Residues 1108 to 1118 show a composition bias toward low complexity; it reads ETSTSDSAAEA. Glycyl lysine isopeptide (Lys-Gly) (interchain with G-Cter in SUMO2) cross-links involve residues lysine 1193 and lysine 1201. Serine 1211 carries the post-translational modification Phosphoserine. Residue lysine 1226 forms a Glycyl lysine isopeptide (Lys-Gly) (interchain with G-Cter in SUMO2) linkage. The disordered stretch occupies residues 1229–1528; sequence AEKKIRKKIK…EESDDDDDLF (300 aa). A Glycyl lysine isopeptide (Lys-Gly) (interchain with G-Cter in SUMO1); alternate cross-link involves residue lysine 1238. Lysine 1238 participates in a covalent cross-link: Glycyl lysine isopeptide (Lys-Gly) (interchain with G-Cter in SUMO2); alternate. Threonine 1245 carries the post-translational modification Phosphothreonine. Positions 1258-1270 are enriched in basic and acidic residues; the sequence is QRIEKKQKKEPGA. Residues lysine 1272, lysine 1279, and lysine 1282 each participate in a glycyl lysine isopeptide (Lys-Gly) (interchain with G-Cter in SUMO2) cross-link. 4 positions are modified to phosphoserine: serine 1291, serine 1293, serine 1295, and serine 1298. Over residues 1296-1306 the composition is skewed to low complexity; that stretch reads DVSSNESNVDV. The residue at position 1323 (threonine 1323) is a Phosphothreonine. Residues 1326–1345 show a composition bias toward acidic residues; that stretch reads LDSDEDFSGLDEKDEDEDFL. Residues serine 1328 and serine 1333 each carry the phosphoserine modification. Threonine 1350 carries the post-translational modification Phosphothreonine. Glycyl lysine isopeptide (Lys-Gly) (interchain with G-Cter in SUMO2) cross-links involve residues lysine 1359 and lysine 1363. Phosphoserine is present on residues serine 1370 and serine 1373. Lysine 1382 participates in a covalent cross-link: Glycyl lysine isopeptide (Lys-Gly) (interchain with G-Cter in SUMO2). 2 positions are modified to phosphoserine: serine 1384 and serine 1388. Residue lysine 1418 forms a Glycyl lysine isopeptide (Lys-Gly) (interchain with G-Cter in SUMO2); alternate linkage. The residue at position 1418 (lysine 1418) is an N6-acetyllysine; alternate. The interval 1429 to 1435 is interaction with PLSCR1; that stretch reads KKRAAPK. Residue lysine 1438 forms a Glycyl lysine isopeptide (Lys-Gly) (interchain with G-Cter in SUMO2); alternate linkage. The residue at position 1438 (lysine 1438) is an N6-acetyllysine; alternate. Residues lysine 1450 and lysine 1455 each participate in a glycyl lysine isopeptide (Lys-Gly) (interchain with G-Cter in SUMO2) cross-link. 4 positions are modified to phosphoserine: serine 1465, serine 1467, serine 1470, and serine 1472. Residues lysine 1480 and lysine 1488 each participate in a glycyl lysine isopeptide (Lys-Gly) (interchain with G-Cter in SUMO2) cross-link. Basic and acidic residues predominate over residues 1506–1519; that stretch reads AKSDRARKPIKYLE. Position 1521 is a phosphoserine (serine 1521).

It belongs to the type II topoisomerase family. Homodimer. Interacts with COPS5. Interacts with RECQL5; this stimulates DNA decatenation. Interacts with SETMAR; stimulates the topoisomerase activity. Interacts with DHX9; this interaction occurs in a E2 enzyme UBE2I- and RNA-dependent manner, negatively regulates DHX9-mediated double-stranded DNA and RNA duplex helicase activity and stimulates TOP2A-mediated supercoiled DNA relaxation activity. Interacts with HNRNPU (via C-terminus); this interaction protects the topoisomerase TOP2A from degradation and positively regulates the relaxation of supercoiled DNA in a RNA-dependent manner. Interacts with MCM3AP. Interacts with ERCC6. Interacts with PLSCR1. Interacts with GCNA; this interaction allows the resolution of topoisomerase II (TOP2A) DNA-protein cross-links. Interacts with POL1RA/RPA1 (via dock II) and UBTF in the context of Pol I complex; may assist Pol I transcription initiation by releasing supercoils occurring during DNA unwinding. Interacts with TPRN; TPRN interacts with a number of DNA damage response proteins, is recruited to sites of DNA damage and may play a role in DNA damage repair. Mg(2+) is required as a cofactor. Requires Mn(2+) as cofactor. The cofactor is Ca(2+). Phosphorylation has no effect on catalytic activity. However, phosphorylation at Ser-1105 by CSNK1D/CK1 promotes DNA cleavable complex formation.

It is found in the cytoplasm. The protein localises to the nucleus. Its subcellular location is the nucleoplasm. It localises to the nucleolus. The enzyme catalyses ATP-dependent breakage, passage and rejoining of double-stranded DNA.. In terms of biological role, key decatenating enzyme that alters DNA topology by binding to two double-stranded DNA molecules, generating a double-stranded break in one of the strands, passing the intact strand through the broken strand, and religating the broken strand. May play a role in regulating the period length of BMAL1 transcriptional oscillation. The protein is DNA topoisomerase 2-alpha (Top2a) of Mus musculus (Mouse).